The sequence spans 315 residues: N-acetyl-gamma-glutamyl-phosphate reductase (315 aa).

Residue Cys117 is part of the active site.

Belongs to the NAGSA dehydrogenase family. Type 2 subfamily.

It localises to the cytoplasm. The enzyme catalyses N-acetyl-L-glutamate 5-semialdehyde + phosphate + NADP(+) = N-acetyl-L-glutamyl 5-phosphate + NADPH + H(+). Its pathway is amino-acid biosynthesis; L-arginine biosynthesis; N(2)-acetyl-L-ornithine from L-glutamate: step 3/4. Its function is as follows. Catalyzes the NADPH-dependent reduction of N-acetyl-5-glutamyl phosphate to yield N-acetyl-L-glutamate 5-semialdehyde. In Burkholderia lata (strain ATCC 17760 / DSM 23089 / LMG 22485 / NCIMB 9086 / R18194 / 383), this protein is N-acetyl-gamma-glutamyl-phosphate reductase.